The following is a 119-amino-acid chain: uncharacterized protein (119 aa).

This is an uncharacterized protein from Schizosaccharomyces pombe (strain 972 / ATCC 24843) (Fission yeast).